The following is a 504-amino-acid chain: Tachykinin-like peptides receptor 86C (504 aa).

Topologically, residues 1–84 (MSEIVDTELL…PYELPWEQKT (84 aa)) are extracellular. Asn-12, Asn-28, and Asn-36 each carry an N-linked (GlcNAc...) asparagine glycan. Residues 85–108 (IWAIIFGLMMFVAIAGNGIVLWIV) form a helical membrane-spanning segment. The Cytoplasmic portion of the chain corresponds to 109–118 (TGHRSMRTVT). A helical transmembrane segment spans residues 119 to 143 (NYFLLNLSIADLLMSSLNCVFNFIF). Residues 144–155 (MLNSDWPFGSIY) are Extracellular-facing. Residues 156 to 179 (CTINNFVANVTVSTSVFTLVAISF) form a helical membrane-spanning segment. Residues 180-199 (DRYIAIVHPLKRRTSRRKVR) lie on the Cytoplasmic side of the membrane. Residues 200–224 (IILVLIWALSCVLSAPCLLYSSIMT) traverse the membrane as a helical segment. Residues 225–250 (KHYYNGKSRTVCFMMWPDGRYPTSMA) lie on the Extracellular side of the membrane. The helical transmembrane segment at 251–275 (DYAYNLIILVLTYGIPMIVMLICYS) threads the bilayer. Residues 276–308 (LMGRVLWGSRSIGENTDRQMESMKSKRKVVRMF) are Cytoplasmic-facing. Residues 309 to 330 (IAIVSIFAICWLPYHLFFIYAY) form a helical membrane-spanning segment. The Extracellular portion of the chain corresponds to 331 to 343 (HNNQVASTKYVQH). The helical transmembrane segment at 344–367 (MYLGFYWLAMSNAMVNPLIYYWMN) threads the bilayer. The Cytoplasmic portion of the chain corresponds to 368–504 (KRFRMYFQRI…NPVELSPKQM (137 aa)). The tract at residues 393-450 (PKSRLTNKNSSNRHTRAETKSQWKRSTMETQIQQAPVTSSCREQRSAQQQQPPGSGTN) is disordered. 2 stretches are compositionally biased toward polar residues: residues 395-404 (SRLTNKNSSN) and 416-450 (KRST…SGTN).

Belongs to the G-protein coupled receptor 1 family. In terms of tissue distribution, expressed in central nervous system, as well as in subsets of neurons in each segment of the developing ventral ganglia.

The protein localises to the cell membrane. Its function is as follows. Receptor for tachykinin-like peptides. The sequence is that of Tachykinin-like peptides receptor 86C (TkR86C) from Drosophila melanogaster (Fruit fly).